Here is an 80-residue protein sequence, read N- to C-terminus: MSNKEITCIKPFKIIALILLIVLIINLSYKLFLRRYLKSTVIWCLGIANTDRNDMMWWQVSPLLERWVWQLVDNYESGYE.

Residues 12–32 form a helical membrane-spanning segment; sequence FKIIALILLIVLIINLSYKLF.

Its subcellular location is the membrane. This is an uncharacterized protein from Saccharomyces cerevisiae (strain ATCC 204508 / S288c) (Baker's yeast).